We begin with the raw amino-acid sequence, 433 residues long: L-saccharopine oxidase (433 aa).

A signal peptide spans 1–18; sequence MSRTIVIVGCGVFGLSTA. 4 N-linked (GlcNAc...) asparagine glycosylation sites follow: Asn-24, Asn-119, Asn-188, and Asn-229.

This sequence belongs to the MSOX/MTOX family. In terms of assembly, monomer. It depends on FAD as a cofactor.

Its subcellular location is the secreted. It localises to the cytoplasm. It is found in the nucleus. It catalyses the reaction L-saccharopine + O2 + H2O = (S)-2-amino-6-oxohexanoate + L-glutamate + H2O2. This Schizosaccharomyces pombe (strain 972 / ATCC 24843) (Fission yeast) protein is L-saccharopine oxidase.